The primary structure comprises 295 residues: Protease HtpX (295 aa).

A run of 2 helical transmembrane segments spans residues 4–24 and 42–62; these read ILLF…TLSL and QLLV…LFIS. A Zn(2+)-binding site is contributed by His-147. The active site involves Glu-148. His-151 contributes to the Zn(2+) binding site. Transmembrane regions (helical) follow at residues 158-178 and 199-219; these read VTLA…ARII and ITTI…VMWF. Glu-224 serves as a coordination point for Zn(2+).

The protein belongs to the peptidase M48B family. Zn(2+) is required as a cofactor.

It is found in the cell inner membrane. The chain is Protease HtpX from Pseudomonas syringae pv. syringae (strain B728a).